A 301-amino-acid polypeptide reads, in one-letter code: Probable alpha-L-glutamate ligase 2 (301 aa).

An ATP-grasp domain is found at 104–287 (LQLLSRKGIG…VTEPIVEYIE (184 aa)). Residues K141, 178-179 (EY), D187, and 211-213 (RSN) each bind ATP. Mg(2+) contacts are provided by D248, E260, and N262. Residues D248, E260, and N262 each coordinate Mn(2+).

It belongs to the RimK family. The cofactor is Mg(2+). It depends on Mn(2+) as a cofactor.

The sequence is that of Probable alpha-L-glutamate ligase 2 from Shewanella baltica (strain OS195).